A 58-amino-acid chain; its full sequence is Bowman-Birk type wound-induced trypsin inhibitor (58 aa).

7 cysteine pairs are disulfide-bonded: Cys4-Cys57, Cys5-Cys20, Cys8-Cys53, Cys10-Cys18, Cys27-Cys34, Cys31-Cys46, and Cys36-Cys44.

It belongs to the Bowman-Birk serine protease inhibitor family.

This is Bowman-Birk type wound-induced trypsin inhibitor from Medicago sativa (Alfalfa).